The sequence spans 72 residues: Large ribosomal subunit protein bL31 (72 aa).

Zn(2+) is bound by residues Cys16, Cys18, Cys37, and Cys40.

The protein belongs to the bacterial ribosomal protein bL31 family. Type A subfamily. As to quaternary structure, part of the 50S ribosomal subunit. The cofactor is Zn(2+).

Its function is as follows. Binds the 23S rRNA. This is Large ribosomal subunit protein bL31 from Hahella chejuensis (strain KCTC 2396).